Here is a 242-residue protein sequence, read N- to C-terminus: Uridylate kinase (242 aa).

Residue 11–14 (KLSG) coordinates ATP. The interval 19-24 (GEKGVG) is involved in allosteric activation by GTP. Glycine 53 is a binding site for UMP. ATP is bound by residues glycine 54 and arginine 58. UMP is bound by residues aspartate 73 and 134 to 141 (IGSPYFST). Residues asparagine 162, tyrosine 168, and aspartate 171 each contribute to the ATP site.

The protein belongs to the UMP kinase family. Homohexamer.

The protein resides in the cytoplasm. It carries out the reaction UMP + ATP = UDP + ADP. Its pathway is pyrimidine metabolism; CTP biosynthesis via de novo pathway; UDP from UMP (UMPK route): step 1/1. Allosterically activated by GTP. Inhibited by UTP. Catalyzes the reversible phosphorylation of UMP to UDP. This chain is Uridylate kinase, found in Streptococcus pyogenes serotype M1.